Consider the following 329-residue polypeptide: MALGPRYGAIRACGRVLERAFSLRKAHSIKDMENTLQLVRNIIPPLSSTKHKGQDGRIGVVGGCQEYTGAPYFAAISALKVGADLSHVFCASAAAPVIKAYSPELIVHPVLDSRSAVHEAEKWLPRLHALVVGPGLGRDDALLRNVQGILEASKARDIPVVIDADGLWLVAQQPALIQGYRKAVLTPNHMEFSRLYDAVLRGPMDSNDSHGSVLRLSQALGNVTVVQKGERDILSNGQQVLVCSQEGSSRRCGGQGDLLSGSLGVLVHWALLAGPEKTNGSSPLLVAAFGACSLTRQCNHQAFQKHGRSTTTSDMIAEVGAAFSKLFET.

One can recognise a YjeF C-terminal domain in the interval 35–326 (TLQLVRNIIP…AEVGAAFSKL (292 aa)). The residue at position 67 (tyrosine 67) is a Phosphotyrosine. Residues glycine 135 and 188–194 (NHMEFSR) contribute to the (6S)-NADPHX site. N-linked (GlcNAc...) asparagine glycans are attached at residues asparagine 207 and asparagine 222. Residues 228 to 232 (KGERD) and 247 to 256 (GSSRRCGGQG) contribute to the ATP site. Residue aspartate 257 coordinates (6S)-NADPHX. N-linked (GlcNAc...) asparagine glycosylation is present at asparagine 279.

This sequence belongs to the NnrD/CARKD family. The cofactor is Mg(2+).

The protein localises to the mitochondrion. It catalyses the reaction (6S)-NADHX + ATP = ADP + phosphate + NADH + H(+). The catalysed reaction is (6S)-NADPHX + ATP = ADP + phosphate + NADPH + H(+). Functionally, catalyzes the dehydration of the S-form of NAD(P)HX at the expense of ATP, which is converted to ADP. Together with NAD(P)HX epimerase, which catalyzes the epimerization of the S- and R-forms, the enzyme allows the repair of both epimers of NAD(P)HX, a damaged form of NAD(P)H that is a result of enzymatic or heat-dependent hydration. In Pongo abelii (Sumatran orangutan), this protein is ATP-dependent (S)-NAD(P)H-hydrate dehydratase.